The sequence spans 339 residues: HPr kinase/phosphorylase (339 aa).

Active-site residues include His-153 and Lys-174. Gly-168 to Ser-175 contacts ATP. Ser-175 is a Mg(2+) binding site. The active-site Proton acceptor; for phosphorylation activity. Proton donor; for dephosphorylation activity is the Asp-192. The segment at Met-216–Asp-225 is important for the catalytic mechanism of both phosphorylation and dephosphorylation. Glu-217 is a Mg(2+) binding site. Residue Arg-258 is part of the active site. Residues Pro-279 to Lys-284 are important for the catalytic mechanism of dephosphorylation.

Belongs to the HPrK/P family. Homohexamer. It depends on Mg(2+) as a cofactor.

It carries out the reaction [HPr protein]-L-serine + ATP = [HPr protein]-O-phospho-L-serine + ADP + H(+). The catalysed reaction is [HPr protein]-O-phospho-L-serine + phosphate + H(+) = [HPr protein]-L-serine + diphosphate. Catalyzes the ATP- as well as the pyrophosphate-dependent phosphorylation of a specific serine residue in HPr, a phosphocarrier protein of the phosphoenolpyruvate-dependent sugar phosphotransferase system (PTS). HprK/P also catalyzes the pyrophosphate-producing, inorganic phosphate-dependent dephosphorylation (phosphorolysis) of seryl-phosphorylated HPr (P-Ser-HPr). This Chlorobium phaeobacteroides (strain BS1) protein is HPr kinase/phosphorylase.